The primary structure comprises 371 residues: Putative glutamate--cysteine ligase 2 (371 aa).

It belongs to the glutamate--cysteine ligase type 2 family. YbdK subfamily.

It catalyses the reaction L-cysteine + L-glutamate + ATP = gamma-L-glutamyl-L-cysteine + ADP + phosphate + H(+). In terms of biological role, ATP-dependent carboxylate-amine ligase which exhibits weak glutamate--cysteine ligase activity. The sequence is that of Putative glutamate--cysteine ligase 2 from Paraburkholderia phytofirmans (strain DSM 17436 / LMG 22146 / PsJN) (Burkholderia phytofirmans).